Reading from the N-terminus, the 122-residue chain is MIQKETNLVVADNSGAKKVRCIHVFGGTGRRYASLGDQIMVTVKAAVPGGVVKKKEVTKAVVVRCAKEKRRKDGSYIRFDENAVVLLNAQGEPRGTRIFGPVARELRDKKYMKIVSLAPEVL.

Belongs to the universal ribosomal protein uL14 family. In terms of assembly, part of the 50S ribosomal subunit. Forms a cluster with proteins L3 and L19. In the 70S ribosome, L14 and L19 interact and together make contacts with the 16S rRNA in bridges B5 and B8.

Functionally, binds to 23S rRNA. Forms part of two intersubunit bridges in the 70S ribosome. The protein is Large ribosomal subunit protein uL14 of Chlorobium phaeobacteroides (strain BS1).